The following is a 686-amino-acid chain: Translation initiation factor IF-2 (686 aa).

The segment at 35 to 99 is disordered; sequence MSTVEDETAE…EHGQKDTDRR (65 aa). Basic and acidic residues predominate over residues 50-68; the sequence is LQEEDKPEEKISKKEPDKK. Over residues 69 to 79 the composition is skewed to basic residues; sequence DRKKTKGKKQM. Over residues 87-99 the composition is skewed to basic and acidic residues; sequence EGTEHGQKDTDRR. The region spanning 186–355 is the tr-type G domain; that stretch reads LRPPIVTVMG…LLVAEMEELK (170 aa). A G1 region spans residues 195 to 202; sequence GHVDHGKT. Position 195–202 (195–202) interacts with GTP; that stretch reads GHVDHGKT. The tract at residues 220-224 is G2; that stretch reads GITQH. A G3 region spans residues 241-244; the sequence is DTPG. GTP contacts are provided by residues 241–245 and 295–298; these read DTPGH and NKVD. The tract at residues 295-298 is G4; the sequence is NKVD. The G5 stretch occupies residues 331-333; it reads SAL.

Belongs to the TRAFAC class translation factor GTPase superfamily. Classic translation factor GTPase family. IF-2 subfamily.

It is found in the cytoplasm. In terms of biological role, one of the essential components for the initiation of protein synthesis. Protects formylmethionyl-tRNA from spontaneous hydrolysis and promotes its binding to the 30S ribosomal subunits. Also involved in the hydrolysis of GTP during the formation of the 70S ribosomal complex. This chain is Translation initiation factor IF-2, found in Halothermothrix orenii (strain H 168 / OCM 544 / DSM 9562).